Reading from the N-terminus, the 181-residue chain is Protein GrpE (181 aa).

Acidic residues predominate over residues 1–24; that stretch reads MSEENIGENEVETPETEPSAEAEV. A disordered region spans residues 1-26; that stretch reads MSEENIGENEVETPETEPSAEAEVES.

Belongs to the GrpE family. In terms of assembly, homodimer.

It is found in the cytoplasm. In terms of biological role, participates actively in the response to hyperosmotic and heat shock by preventing the aggregation of stress-denatured proteins, in association with DnaK and GrpE. It is the nucleotide exchange factor for DnaK and may function as a thermosensor. Unfolded proteins bind initially to DnaJ; upon interaction with the DnaJ-bound protein, DnaK hydrolyzes its bound ATP, resulting in the formation of a stable complex. GrpE releases ADP from DnaK; ATP binding to DnaK triggers the release of the substrate protein, thus completing the reaction cycle. Several rounds of ATP-dependent interactions between DnaJ, DnaK and GrpE are required for fully efficient folding. The protein is Protein GrpE of Rhizorhabdus wittichii (strain DSM 6014 / CCUG 31198 / JCM 15750 / NBRC 105917 / EY 4224 / RW1) (Sphingomonas wittichii).